A 307-amino-acid chain; its full sequence is Elongation factor Ts (307 aa).

Residues 80–83 (TDFV) form an involved in Mg(2+) ion dislocation from EF-Tu region.

Belongs to the EF-Ts family.

Its subcellular location is the cytoplasm. Functionally, associates with the EF-Tu.GDP complex and induces the exchange of GDP to GTP. It remains bound to the aminoacyl-tRNA.EF-Tu.GTP complex up to the GTP hydrolysis stage on the ribosome. The protein is Elongation factor Ts of Bradyrhizobium diazoefficiens (strain JCM 10833 / BCRC 13528 / IAM 13628 / NBRC 14792 / USDA 110).